We begin with the raw amino-acid sequence, 473 residues long: Gamma-aminobutyric acid receptor subunit beta-3 (473 aa).

A signal peptide spans 1–25 (MWGLAGGRLFGIFSAPVLVAVVCCA). Topologically, residues 26–246 (QSVNDPGNMS…FRLKRNIGYF (221 aa)) are extracellular. 2 N-linked (GlcNAc...) asparagine glycosylation sites follow: Asn33 and Asn105. 120 to 122 (DTY) provides a ligand contact to benzamidine. Tyr122 serves as a coordination point for 4-aminobutanoate. Tyr122 is a histamine binding site. Cysteines 161 and 175 form a disulfide. Residue Asn174 is glycosylated (N-linked (GlcNAc...) asparagine). The 4-aminobutanoate site is built by Glu180 and Tyr182. Residues 180–182 (ESY) and Phe225 each bind benzamidine. 181-182 (SY) serves as a coordination point for histamine. Thr227 provides a ligand contact to 4-aminobutanoate. Thr227 contacts histamine. The helical transmembrane segment at 247–267 (ILQTYMPSILITILSWVSFWI) threads the bilayer. Residues 268–271 (NYDA) lie on the Cytoplasmic side of the membrane. A helical membrane pass occupies residues 272–292 (SAARVALGITTVLTMTTINTH). The Extracellular portion of the chain corresponds to 293–304 (LRETLPKIPYVK). The chain crosses the membrane as a helical span at residues 305-328 (AIDMYLMGCFVFVFLALLEYAFVN). Residues 329–447 (YIFFGRGPQR…KIPDLTDVNA (119 aa)) lie on the Cytoplasmic side of the membrane. A helical membrane pass occupies residues 448 to 470 (IDRWSRIVFPFTFSLFNLVYWLY). Over 471-473 (YVN) the chain is Extracellular.

Belongs to the ligand-gated ion channel (TC 1.A.9) family. Gamma-aminobutyric acid receptor (TC 1.A.9.5) subfamily. GABRB3 sub-subfamily. As to quaternary structure, heteropentamer, formed by a combination of alpha (GABRA1-6), beta (GABRB1-3), gamma (GABRG1-3), delta (GABRD), epsilon (GABRE), rho (GABRR1-3), pi (GABRP) and theta (GABRQ) chains, each subunit exhibiting distinct physiological and pharmacological properties. Can form functional homopentamers (in vitro). Interacts with UBQLN1. May interact with KIF21B. Identified in a complex of 720 kDa composed of LHFPL4, NLGN2, GABRA1, GABRB2, GABRG2 and GABRB3. Interacts with LHFPL4. Interacts with GIT1; this interaction is required for synaptic GABRB3 surface stability and inhibitory synapse strength.

The protein localises to the postsynaptic cell membrane. Its subcellular location is the cell membrane. The protein resides in the cytoplasmic vesicle membrane. It carries out the reaction chloride(in) = chloride(out). With respect to regulation, potentiated by histamine. In terms of biological role, beta subunit of the heteropentameric ligand-gated chloride channel gated by gamma-aminobutyric acid (GABA), a major inhibitory neurotransmitter in the brain. GABA-gated chloride channels, also named GABA(A) receptors (GABAAR), consist of five subunits arranged around a central pore and contain GABA active binding site(s) located at the alpha and beta subunit interface(s). GABAARs containing beta-3/GABRB3 subunit are found at both synaptic and extrasynaptic sites. When activated by GABA, GABAARs selectively allow the flow of chloride anions across the cell membrane down their electrochemical gradient. Chloride influx into the postsynaptic neuron following GABAAR opening decreases the neuron ability to generate a new action potential, thereby reducing nerve transmission. GABAARs containing alpha-1 and beta-3 subunits exhibit synaptogenic activity; the gamma-2 subunit being necessary but not sufficient to induce rapid synaptic contacts formation. Extrasynaptic beta-3 receptors contribute to the tonic GABAergic inhibition. GABAARs containing alpha-1, beta-3 and epsilon subunits may also permit spontaneous chloride channel activity while preserving the structural information required for GABA-gated openings. Beta-containing GABAARs can simultaneously bind GABA and histamine where histamine binds at the interface of two neighboring beta subunits, which may be involved in the regulation of sleep and wakefulness. Plays an important role in somatosensation and in the production of antinociception. This chain is Gamma-aminobutyric acid receptor subunit beta-3, found in Homo sapiens (Human).